The primary structure comprises 191 residues: Putative RNA-binding protein EEED8.4 (191 aa).

Residues 55–132 form the RRM domain; the sequence is KSVFIGNVDF…RPIVVTAKRT (78 aa). Residues 136–160 form a disordered region; the sequence is GMGHGVRGSSRGTFGRGRGAARGAP.

The protein is Putative RNA-binding protein EEED8.4 of Caenorhabditis elegans.